Reading from the N-terminus, the 506-residue chain is MDSGLGSSYPEERSGPPEIRPEEINFEELIGTGSFGKVYKGRCRQKAVAVKLLHKQNFDAATLSAFRKEVHLMSKIYHPNICLFMGACTIPGRCVIVTELVPKGNLETLLHDQKIQLPLYLRMRMARDAALGINWLHESNPVFVHRDIKSSNLLVDENMRVKICDFGLSALKQKHKMLKDQSSAKGTPLYMAPEVMMFKEFNESSDVYSFGIVLWEILTRKEPFSHHRELEKFREAVCVKHERPPIPNDCLDSLRRLIEKCWDKEPISRPSFKEIISALDHVIIDAAISDLNGRDFWKKSFLTEQEVPWEAFIDALCNWSKAPARNQCDKTSIDYLNIKCLKAVLAESPKSEGTGVETVVNIEKFGKILEFFGPVPEPAPGHSIMDTVREILSQKWFHGDLDTTEAASRLNGQPIGSFLIRFSSTNAGCFTISQVVDGGSIKHQRVSRQGVKFNYQNVIYNSLIEIVSKNGGGANGDVKLDSQLGVPNYKFMSLFCVLNKESEVYQ.

Residues 1-21 (MDSGLGSSYPEERSGPPEIRP) are disordered. Over residues 10-21 (PEERSGPPEIRP) the composition is skewed to basic and acidic residues. The Protein kinase domain occupies 24–284 (INFEELIGTG…IISALDHVII (261 aa)). Residues 30 to 38 (IGTGSFGKV) and lysine 51 contribute to the ATP site. Residue aspartate 147 is the Proton acceptor of the active site. The SH2 domain occupies 396 to 488 (WFHGDLDTTE…KLDSQLGVPN (93 aa)).

It belongs to the protein kinase superfamily. TKL Ser/Thr protein kinase family. SH2 domain-containing protein kinase subfamily.

Its subcellular location is the membrane. The enzyme catalyses L-seryl-[protein] + ATP = O-phospho-L-seryl-[protein] + ADP + H(+). It catalyses the reaction L-threonyl-[protein] + ATP = O-phospho-L-threonyl-[protein] + ADP + H(+). Its function is as follows. Required for proper chemotaxis and phagocytosis; proper spatiotemporal control of F-actin levels in chemotaxing cells. Negative regulator of the PI3K (phosphatidylinositol 3 kinase) pathway. Predominantly phosphorylates serines and threonines and tyrosines at a lower level. The polypeptide is Dual specificity protein kinase shkC (shkC) (Dictyostelium discoideum (Social amoeba)).